Consider the following 142-residue polypeptide: Large ribosomal subunit protein uL13 (142 aa).

It belongs to the universal ribosomal protein uL13 family. Part of the 50S ribosomal subunit.

Its function is as follows. This protein is one of the early assembly proteins of the 50S ribosomal subunit, although it is not seen to bind rRNA by itself. It is important during the early stages of 50S assembly. The polypeptide is Large ribosomal subunit protein uL13 (Xylella fastidiosa (strain 9a5c)).